The following is a 278-amino-acid chain: MITSRVLRFPRKPFVDLDYSRHMPAAYVERTKRTVPRKVFGDRFGAPDIKMYYVHPDDYLPSHRRPWEDKQLSSHLQRSDKYFSAQLSNKYFELRRPKSERMPDTEWTFFPGDLVQVMVGKDKGRQGLVLTISRDSSEVVVDGLHTRLGEDMEGSEKLGVDKTLRWQEQPLSVSKKQVMLVDPNDENPCEARWQLNASADEYIRVSTRSGYEIPIPSQAKVTYEYLQPENYIEVEGKDTPSDAVLERTYMPRVASFEQEIMEEMGIKEDRTPKPTFWY.

The KOW domain maps to 109–142; sequence FFPGDLVQVMVGKDKGRQGLVLTISRDSSEVVVD.

It belongs to the universal ribosomal protein uL24 family.

It localises to the mitochondrion. The protein is Large ribosomal subunit protein uL24m (mrpl-24) of Caenorhabditis briggsae.